Here is a 256-residue protein sequence, read N- to C-terminus: MRYQASPALVKAPRALLCIHGAGCSPAIFRVQLSKLRAALRENFEFVYVTAPFPSSAGPGILPVFADLGPYYSWFESSSDNNHNGPSVSERLAAVHDPIRRTIVDWQTQHPHIPIVGAIGFSEGALVTTLLLWQQQMGHLPWLPRMSVALLICPWYQDEASQYMRNEVMKNHDDDNDSKDTEWQEELVIRIPTLHLQGRDDFALAGSKMLVARHFSPREAQVLEFAGQHQFPNRPRDVLEVINRFRKLCVTAQTLE.

Active-site charge relay system residues include Ser122, Asp201, and His229.

The protein belongs to the LovG family.

The enzyme catalyses dihydromonacolin L-[lovastatin nonaketide synthase] + H2O = holo-[lovastatin nonaketide synthase] + dihydromonacolin L carboxylate + H(+). It participates in polyketide biosynthesis; lovastatin biosynthesis. Its function is as follows. Esterase; part of the gene cluster that mediates the biosynthesis of lovastatin (also known as mevinolin, mevacor or monacolin K), a hypolipidemic inhibitor of (3S)-hydroxymethylglutaryl-coenzyme A (HMG-CoA) reductase (HMGR). The first step in the biosynthesis of lovastatin is the production of dihydromonacolin L acid by the lovastatin nonaketide synthase lovB and the trans-acting enoyl reductase lovC via condensation of one acetyl-CoA unit and 8 malonyl-CoA units. Dihydromonacolin L acid is released from lovB by the thioesterase lovG. Next, dihydromonacolin L acid is oxidized by the dihydromonacolin L monooxygenase lovA twice to form monacolin J acid. The 2-methylbutyrate moiety of lovastatin is synthesized by the lovastatin diketide synthase lovF via condensation of one acetyl-CoA unit and one malonyl-CoA unit. Finally, the covalent attachment of this moiety to monacolin J acid is catalyzed by the transesterase lovD to yield lovastatin. LovD has broad substrate specificity and can also convert monacolin J to simvastatin using alpha-dimethylbutanoyl-S-methyl-3-mercaptopropionate (DMB-S-MMP) as the thioester acyl donor, and can also catalyze the reverse reaction and function as hydrolase in vitro. LovD has much higher activity with LovF-bound 2-methylbutanoate than with free diketide substrates. In terms of biological role, esterase that catalyzes the release of covalently bound dihydromonacolin L from LovB during lovastatin biosynthesis. The sequence is that of Dihydromonacolin L-[lovastatin nonaketide synthase] thioesterase from Aspergillus terreus.